A 412-amino-acid polypeptide reads, in one-letter code: Peptidase T (412 aa).

His84 contacts Zn(2+). Residue Asp86 is part of the active site. Zn(2+) is bound at residue Asp146. The active-site Proton acceptor is the Glu179. Zn(2+) is bound by residues Glu180, Asp202, and His385.

This sequence belongs to the peptidase M20B family. The cofactor is Zn(2+).

It localises to the cytoplasm. It carries out the reaction Release of the N-terminal residue from a tripeptide.. In terms of biological role, cleaves the N-terminal amino acid of tripeptides. This Pasteurella multocida (strain Pm70) protein is Peptidase T.